A 504-amino-acid chain; its full sequence is Galactokinase (504 aa).

The alpha-D-galactose site is built by Arg-47, Asp-53, His-54, and Asp-56. Gly-150, Gly-152, Ser-154, and Ser-155 together coordinate ATP. Alpha-D-galactose contacts are provided by Asn-196 and Asp-200. Asp-200 acts as the Proton acceptor in catalysis. Ser-244, Asn-245, and Lys-246 together coordinate ATP. Tyr-254 contacts alpha-D-galactose.

The protein belongs to the GHMP kinase family. GalK subfamily.

It carries out the reaction alpha-D-galactose + ATP = alpha-D-galactose 1-phosphate + ADP + H(+). It functions in the pathway carbohydrate metabolism; galactose metabolism. Its function is as follows. Galactokinase is a key enzyme in the galactose metabolism where it catalyzes the conversion of alpha-D-galactose to galactose 1-phosphate. Can also induce the transcription of the gal genes in response to the organism being challenged with galactose as the sole source of carbon. This chain is Galactokinase, found in Candida parapsilosis (Yeast).